Consider the following 304-residue polypeptide: Ornithine carbamoyltransferase (304 aa).

Residues 51–54, Gln-78, Arg-102, and 129–132 each bind carbamoyl phosphate; these read STRT and HPVQ. L-ornithine is bound by residues Asn-157, Asp-221, and 225 to 226; that span reads SM. Carbamoyl phosphate is bound by residues 261–262 and Arg-289; that span reads CL.

This sequence belongs to the aspartate/ornithine carbamoyltransferase superfamily. OTCase family.

It localises to the cytoplasm. It carries out the reaction carbamoyl phosphate + L-ornithine = L-citrulline + phosphate + H(+). It participates in amino-acid degradation; L-arginine degradation via ADI pathway; carbamoyl phosphate from L-arginine: step 2/2. Its function is as follows. Reversibly catalyzes the transfer of the carbamoyl group from carbamoyl phosphate (CP) to the N(epsilon) atom of ornithine (ORN) to produce L-citrulline. This Campylobacter curvus (strain 525.92) protein is Ornithine carbamoyltransferase.